A 297-amino-acid polypeptide reads, in one-letter code: Putative S-adenosyl-L-methionine-dependent methyltransferase Mmcs_1044 (297 aa).

Residues aspartate 124 and 153–154 (DL) each bind S-adenosyl-L-methionine.

This sequence belongs to the UPF0677 family.

In terms of biological role, exhibits S-adenosyl-L-methionine-dependent methyltransferase activity. This Mycobacterium sp. (strain MCS) protein is Putative S-adenosyl-L-methionine-dependent methyltransferase Mmcs_1044.